Here is a 530-residue protein sequence, read N- to C-terminus: 4-alpha-glucanotransferase (530 aa).

This sequence belongs to the disproportionating enzyme family.

The protein resides in the cytoplasm. It catalyses the reaction Transfers a segment of a (1-&gt;4)-alpha-D-glucan to a new position in an acceptor, which may be glucose or a (1-&gt;4)-alpha-D-glucan.. The polypeptide is 4-alpha-glucanotransferase (malQ) (Chlamydia caviae (strain ATCC VR-813 / DSM 19441 / 03DC25 / GPIC) (Chlamydophila caviae)).